The primary structure comprises 218 residues: MLRFLSKNSVAAIRNVSIARGVHTKATLPPLPYAYNALEPALSETIMKLHHDKHHQTYVNNLNAAQEKLADPNLDLEGEVALQAAIKFNGGGHINHSLFWKILAPQKEGGGKPVTSGSLHKAITSKWGSLEDFQKEMNAALASIQGSGWAWLIVDKDGSLRITTTANQDTIVKSKPIIGIDAWEHAYYPQYENRKAEYFKAIWNVINWKEAESRYSNR.

Residues 1–21 constitute a mitochondrion transit peptide; the sequence is MLRFLSKNSVAAIRNVSIARG. Mn(2+) is bound by residues H50 and H96. A Phosphoserine modification is found at S129. 2 residues coordinate Mn(2+): D181 and H185.

It belongs to the iron/manganese superoxide dismutase family. As to quaternary structure, homodimer. Mn(2+) is required as a cofactor.

It localises to the mitochondrion matrix. The catalysed reaction is 2 superoxide + 2 H(+) = H2O2 + O2. In terms of biological role, destroys superoxide anion radicals which are normally produced within the cells and which are toxic to biological systems. The protein is Superoxide dismutase [Mn], mitochondrial (sod2) of Schizosaccharomyces pombe (strain 972 / ATCC 24843) (Fission yeast).